The primary structure comprises 462 residues: uncharacterized protein (462 aa).

7 WD repeats span residues 170-209, 212-260, 263-302, 305-344, 347-386, 389-430, and 433-462; these read GGER…EVQL, GHTD…PLLR, GHLA…ELLM, GHSE…SIMV, EHIR…LAHT, AHSS…LIKS, and GHEE…LWYP.

Its subcellular location is the cytoplasm. This is an uncharacterized protein from Schizosaccharomyces pombe (strain 972 / ATCC 24843) (Fission yeast).